The primary structure comprises 453 residues: Zinc finger and BTB domain-containing protein 44 (453 aa).

Residue lysine 4 forms a Glycyl lysine isopeptide (Lys-Gly) (interchain with G-Cter in SUMO2) linkage. Residues 31 to 98 (CDITIRVQDK…AYTATLSINT (68 aa)) form the BTB domain. Serine 135 is subject to Phosphoserine. Residues 135–157 (SQPEKSLDAGQENSSNCNFTSRD) are disordered. The span at 145–157 (QENSSNCNFTSRD) shows a compositional bias: polar residues. Serine 159, serine 161, serine 165, serine 191, serine 194, and serine 199 each carry phosphoserine. The residue at position 200 (threonine 200) is a Phosphothreonine. The disordered stretch occupies residues 241–266 (QPEKAKQAENTRTLELPGPSEAGRRV). Residue lysine 290 forms a Glycyl lysine isopeptide (Lys-Gly) (interchain with G-Cter in SUMO2) linkage. Disordered stretches follow at residues 295 to 324 (SDEE…PGSE) and 336 to 366 (SSSI…ADDD). Residues 304 to 318 (SQPVSASQSSLSDQQ) are compositionally biased toward low complexity. A compositionally biased stretch (polar residues) spans 352-361 (TLQSTSSTNA). 2 C2H2-type zinc fingers span residues 399 to 421 (FQCP…MLIH) and 427 to 449 (FQCD…RLKH).

It localises to the nucleus. In Mus musculus (Mouse), this protein is Zinc finger and BTB domain-containing protein 44 (Zbtb44).